The primary structure comprises 130 residues: Small ribosomal subunit protein uS11 (130 aa).

The protein belongs to the universal ribosomal protein uS11 family. As to quaternary structure, part of the 30S ribosomal subunit. Interacts with proteins S7 and S18. Binds to IF-3.

Located on the platform of the 30S subunit, it bridges several disparate RNA helices of the 16S rRNA. Forms part of the Shine-Dalgarno cleft in the 70S ribosome. The chain is Small ribosomal subunit protein uS11 from Prochlorococcus marinus (strain MIT 9211).